A 457-amino-acid polypeptide reads, in one-letter code: UDP-N-acetylmuramoylalanine--D-glutamate ligase (457 aa).

An ATP-binding site is contributed by G116 to T122.

Belongs to the MurCDEF family.

The protein resides in the cytoplasm. It carries out the reaction UDP-N-acetyl-alpha-D-muramoyl-L-alanine + D-glutamate + ATP = UDP-N-acetyl-alpha-D-muramoyl-L-alanyl-D-glutamate + ADP + phosphate + H(+). Its pathway is cell wall biogenesis; peptidoglycan biosynthesis. In terms of biological role, cell wall formation. Catalyzes the addition of glutamate to the nucleotide precursor UDP-N-acetylmuramoyl-L-alanine (UMA). This Caldicellulosiruptor bescii (strain ATCC BAA-1888 / DSM 6725 / KCTC 15123 / Z-1320) (Anaerocellum thermophilum) protein is UDP-N-acetylmuramoylalanine--D-glutamate ligase.